The primary structure comprises 171 residues: UPF0312 protein SAOUHSC_03022 (171 aa).

The protein belongs to the UPF0312 family.

The polypeptide is UPF0312 protein SAOUHSC_03022 (Staphylococcus aureus (strain NCTC 8325 / PS 47)).